Here is a 1634-residue protein sequence, read N- to C-terminus: Probable serine/threonine-protein kinase DDB_G0282895 (1634 aa).

Residues 40-63 (YKGNLNENKLKNGKGTFLFPNSIY) form an MORN 1 repeat. The interval 84-131 (QKIQKKSSQSKSQQQPPSQTKKSSSPINLSPRLQGQNPTITTNGSNNN) is disordered. Low complexity predominate over residues 89–109 (KSSQSKSQQQPPSQTKKSSSP). Positions 110 to 119 (INLSPRLQGQ) are enriched in polar residues. Low complexity predominate over residues 120–131 (NPTITTNGSNNN). One copy of the MORN 2 repeat lies at 169-191 (YNGKWINGKANGIGCFHFSKDDS). Composition is skewed to low complexity over residues 273–292 (SNNN…LSPT) and 318–339 (SGSG…PISS). Disordered stretches follow at residues 273–367 (SNNN…QQQQ), 658–750 (TTAT…TFSV), and 783–816 (SSIL…NCGQ). Residues 340–351 (GLQHSKTQPNVS) are compositionally biased toward polar residues. Composition is skewed to low complexity over residues 352–367 (QSQN…QQQQ), 658–688 (TTAT…TTTT), and 703–715 (PPSQ…SPSS). A compositionally biased stretch (polar residues) spans 716-732 (DQTNLPSIAISSSNGIS). Residues 787–813 (NNNNNNNNNNNNNNNNNNNNNNNNNNN) show a composition bias toward low complexity. Residues 1255–1275 (IFIGFMELCVIDELCGFSFIY) form a helical membrane-spanning segment. The Protein kinase domain occupies 1377–1634 (LQILQFLGEG…IIQKLCNHKC (258 aa)). Residues 1383–1391 (LGEGALAEV) and Lys1404 each bind ATP. Asp1500 acts as the Proton acceptor in catalysis.

Belongs to the protein kinase superfamily. TKL Ser/Thr protein kinase family.

It localises to the membrane. It catalyses the reaction L-seryl-[protein] + ATP = O-phospho-L-seryl-[protein] + ADP + H(+). It carries out the reaction L-threonyl-[protein] + ATP = O-phospho-L-threonyl-[protein] + ADP + H(+). The sequence is that of Probable serine/threonine-protein kinase DDB_G0282895 from Dictyostelium discoideum (Social amoeba).